Here is a 286-residue protein sequence, read N- to C-terminus: uncharacterized protein (286 aa).

Residues isoleucine 54, asparagine 128, and lysine 162 each coordinate NADP(+). Residue serine 178 is the Proton donor of the active site. NADP(+) contacts are provided by tyrosine 192, lysine 196, isoleucine 225, and threonine 227. The active-site Proton acceptor is the tyrosine 192. The active-site Lowers pKa of active site Tyr is lysine 196.

This sequence belongs to the short-chain dehydrogenases/reductases (SDR) family.

This is an uncharacterized protein from Schizosaccharomyces pombe (strain 972 / ATCC 24843) (Fission yeast).